Consider the following 180-residue polypeptide: GTP cyclohydrolase 1 (180 aa).

Zn(2+)-binding residues include Cys-71, His-74, and Cys-142.

It belongs to the GTP cyclohydrolase I family. In terms of assembly, homomer.

The enzyme catalyses GTP + H2O = 7,8-dihydroneopterin 3'-triphosphate + formate + H(+). Its pathway is cofactor biosynthesis; 7,8-dihydroneopterin triphosphate biosynthesis; 7,8-dihydroneopterin triphosphate from GTP: step 1/1. The protein is GTP cyclohydrolase 1 of Helicobacter pylori (strain Shi470).